The following is a 20-amino-acid chain: Snaclec ophioluxin subunit alpha (20 aa).

A disulfide bridge links Cys-4 with Cys-15. One can recognise a C-type lectin domain in the interval 11–20; that stretch reads YDQHCYRIIN.

Belongs to the snaclec family. As to quaternary structure, heterodimer of subunits alpha and beta; disulfide-linked. As to expression, expressed by the venom gland.

Its subcellular location is the secreted. Binds to the platelet and collagen receptor glycoprotein VI (GP6) and activates platelet aggregation. This Ophiophagus hannah (King cobra) protein is Snaclec ophioluxin subunit alpha.